The chain runs to 433 residues: PHO85 cyclin-10 (433 aa).

The segment covering 1–10 (MDMTKNHTTD) has biased composition (basic and acidic residues). 2 disordered regions span residues 1–20 (MDMTKNHTTDTEEFDDGDIR) and 51–81 (LTSEWDQSRSNTPGLAEGKTEKAQPCGTTDS). Residues 51–63 (LTSEWDQSRSNTP) are compositionally biased toward polar residues.

It belongs to the cyclin family. PHO80 subfamily. In terms of assembly, forms a cyclin-CDK complex with PHO85. Interacts with GSY2, independent of the presence of PHO85.

It is found in the cytoplasm. Functionally, cyclin partner of the cyclin-dependent kinase (CDK) PHO85. Together with cyclin PCL8, negatively controls glycogen accumulation under favorable growth conditions. The PCL10-PHO85 cyclin-CDK holoenzyme has glycogen synthase kinase activity and phosphorylates and negatively regulates glycogen synthase GSY2. Also has minor GLC8 kinase activity. The polypeptide is PHO85 cyclin-10 (PCL10) (Saccharomyces cerevisiae (strain ATCC 204508 / S288c) (Baker's yeast)).